The primary structure comprises 60 residues: Large ribosomal subunit protein uL30 (60 aa).

The protein belongs to the universal ribosomal protein uL30 family. In terms of assembly, part of the 50S ribosomal subunit.

The chain is Large ribosomal subunit protein uL30 from Polaromonas naphthalenivorans (strain CJ2).